Reading from the N-terminus, the 308-residue chain is Large ribosomal subunit protein mL38 (308 aa).

The transit peptide at 1–17 directs the protein to the mitochondrion; the sequence is MKRVWPRIPTISNVCRA.

Belongs to the phosphatidylethanolamine-binding protein family. Mitochondrion-specific ribosomal protein mL38 subfamily. In terms of assembly, component of the mitochondrial large ribosomal subunit (mt-LSU). Mature yeast 74S mitochondrial ribosomes consist of a small (37S) and a large (54S) subunit. The 37S small subunit contains a 15S ribosomal RNA (15S mt-rRNA) and at least 32 different proteins. The 54S large subunit contains a 21S rRNA (21S mt-rRNA) and at least 45 different proteins.

It is found in the mitochondrion. Functionally, component of the mitochondrial ribosome (mitoribosome), a dedicated translation machinery responsible for the synthesis of mitochondrial genome-encoded proteins, including at least some of the essential transmembrane subunits of the mitochondrial respiratory chain. The mitoribosomes are attached to the mitochondrial inner membrane and translation products are cotranslationally integrated into the membrane. The chain is Large ribosomal subunit protein mL38 (mrpl35) from Schizosaccharomyces pombe (strain 972 / ATCC 24843) (Fission yeast).